The primary structure comprises 274 residues: Penicillin-insensitive murein endopeptidase (274 aa).

The N-terminal stretch at 1-19 (MKKTVIALLAWFVSSASLA) is a signal peptide. Intrachain disulfides connect Cys44/Cys265, Cys187/Cys235, and Cys216/Cys223. Positions 110, 113, 120, 147, 150, and 211 each coordinate Zn(2+). A disordered region spans residues 225 to 274 (DQPLPPPGDGCGAELQSWFEPPKPGTTKPEKKTPPPLPPSCQALLDEHVL).

Belongs to the peptidase M74 family. In terms of assembly, dimer. The cofactor is Zn(2+).

The protein resides in the periplasm. Murein endopeptidase that cleaves the D-alanyl-meso-2,6-diamino-pimelyl amide bond that connects peptidoglycan strands. Likely plays a role in the removal of murein from the sacculus. This Salmonella paratyphi C (strain RKS4594) protein is Penicillin-insensitive murein endopeptidase.